The following is a 501-amino-acid chain: Zinc-binding lipoprotein AdcA (501 aa).

A signal peptide spans 1–18; that stretch reads MKKISLLLASLCALFLVA. Residue Cys-19 is the site of N-palmitoyl cysteine attachment. A lipid anchor (S-diacylglycerol cysteine) is attached at Cys-19. His-63 contacts Zn(2+). Residues 116 to 136 form a disordered region; that stretch reads LPGGEEEEGDHDHGEEGHHHE. A his-rich loop region spans residues 120 to 136; sequence EEEEGDHDHGEEGHHHE. Residues 125–136 show a composition bias toward basic and acidic residues; it reads DHDHGEEGHHHE. Zn(2+)-binding residues include His-140, His-204, and Glu-279.

It belongs to the bacterial solute-binding protein 9 family.

Its subcellular location is the cell membrane. Its function is as follows. Part of the ATP-binding cassette (ABC) transport system AdcABC involved in zinc import. Binds zinc with high affinity and specificity and delivers it to the membrane permease for translocation into the cytoplasm. Required for transformability. The protein is Zinc-binding lipoprotein AdcA (adcA) of Streptococcus pneumoniae (strain ATCC BAA-255 / R6).